Reading from the N-terminus, the 463-residue chain is MLSLSHPHPHPAASTTAPRHQRTAPVWHRRRASHIAASAILLPGGGSTGGRGGPGDRRLPFTPPPMAPPGQLYQPFHPPPSPLPPSLRNLDLSERLQILRDRMGLWHEYAPLISSLSRDGFNPSSIQEATGISGVEQNCLVVASQVRDSLLDDRAAAFPPDLLPYFDSLGGPEVLYELRFLNARQRADAARHAIGYRLEPKGVRELARAMKGFPRWRGEEGWEAFSKDSPADCLAFARFRQSREAIDVQDRVAELERALQVVETESGRARVELELERARRKAAGEEEVDEEGEEDDAAASLRPGVTVVRLRYGEVAEATTVILLPVVRETDGVAAMESAPRRAKTDVGLGVVEVDRAWARWAVVPGWGPVAEAADDAVVVELADGRRLPWRMSDEEPVLVIANRSKKEVVEEGVYVLEREGRLVVERGKKLAEQGIAAAAAEVVIVVRPPKDEDDMVSDEEWD.

Low complexity predominate over residues 1–18; the sequence is MLSLSHPHPHPAASTTAP. The transit peptide at 1–31 directs the protein to the chloroplast; the sequence is MLSLSHPHPHPAASTTAPRHQRTAPVWHRRR. A disordered region spans residues 1 to 84; sequence MLSLSHPHPH…PFHPPPSPLP (84 aa). A compositionally biased stretch (basic residues) spans 19–33; sequence RHQRTAPVWHRRRAS. Positions 43-53 are enriched in gly residues; that stretch reads PGGGSTGGRGG. Residues 83 to 275 are N-terminal alpha-helix; that stretch reads LPPSLRNLDL…SGRARVELEL (193 aa). The stretch at 240-294 forms a coiled coil; sequence RQSREAIDVQDRVAELERALQVVETESGRARVELELERARRKAAGEEEVDEEGEE. The segment at 305–450 is C-terminal beta sheet; it reads VTVVRLRYGE…AEVVIVVRPP (146 aa).

The protein belongs to the RAF family. In terms of assembly, homotrimer. As to expression, expressed in bundle sheath.

Its subcellular location is the plastid. The protein resides in the chloroplast. In terms of biological role, required for assembly or stability of RuBisCO. Acts at a postchaperonin step to fold and/or assemble the large subunit (LS) into RuBisCO. The protein is Rubisco accumulation factor 1, chloroplastic of Zea mays (Maize).